Consider the following 876-residue polypeptide: Pre-mRNA-splicing factor ATP-dependent RNA helicase-like protein PRP2 (876 aa).

The tract at residues 1–111 is disordered; sequence MSSITSETGK…KGLLGDSENE (111 aa). Ser-2 carries the N-acetylserine modification. Residues 61–70 are compositionally biased toward polar residues; that stretch reads VFSNTNQGPE. A Helicase ATP-binding domain is found at 233–399; the sequence is LQEIKKNQVL…FDNCPIFNVP (167 aa). 246–253 contributes to the ATP binding site; it reads GETGSGKT. The DEAH box signature appears at 346–349; the sequence is DEAH. Residues 424–598 enclose the Helicase C-terminal domain; it reads TIFQIHTTQS…NTVLLLLSLG (175 aa).

The protein belongs to the DEAD box helicase family. DEAH subfamily. In terms of assembly, interacts directly with pre-mRNA. According to PubMed:2251118, associated with spliceosomes prior to and throughout step 1 of the splicing reaction. According to PubMed:8943336, it leaves the spliceosome before reaction 1. Interacts with SPP2.

The protein localises to the nucleus. It carries out the reaction ATP + H2O = ADP + phosphate + H(+). Functionally, involved in pre-mRNA splicing. Is required together with ATP and at least one other factor, for the first cleavage-ligation reaction. Functions as a molecular motor in the activation of the precatalytic spliceosome for the first transesterification reaction of pre-mRNA splicing by hydrolyzing ATP to cause the activation of the spliceosome without the occurrence of splicing. Capable of hydrolyzing nucleoside triphosphates in the presence of single-stranded RNAs such as poly(U). The chain is Pre-mRNA-splicing factor ATP-dependent RNA helicase-like protein PRP2 (PRP2) from Saccharomyces cerevisiae (strain ATCC 204508 / S288c) (Baker's yeast).